A 485-amino-acid polypeptide reads, in one-letter code: Glutamate--tRNA ligase (485 aa).

The 'HIGH' region motif lies at 11–21; the sequence is PSPTGYMHVGN. The Zn(2+) site is built by C108, C110, C135, and D137. The 'KMSKS' region motif lies at 252–256; the sequence is KLSKR. ATP is bound at residue K255.

The protein belongs to the class-I aminoacyl-tRNA synthetase family. Glutamate--tRNA ligase type 1 subfamily. In terms of assembly, monomer. It depends on Zn(2+) as a cofactor.

It localises to the cytoplasm. The enzyme catalyses tRNA(Glu) + L-glutamate + ATP = L-glutamyl-tRNA(Glu) + AMP + diphosphate. In terms of biological role, catalyzes the attachment of glutamate to tRNA(Glu) in a two-step reaction: glutamate is first activated by ATP to form Glu-AMP and then transferred to the acceptor end of tRNA(Glu). The chain is Glutamate--tRNA ligase from Clostridium botulinum (strain Loch Maree / Type A3).